The primary structure comprises 113 residues: Transcriptional activator RamA (113 aa).

An HTH araC/xylS-type domain is found at 9 to 107; sequence DTIVEWIDDN…HQPPGAYRKE (99 aa). DNA-binding regions (H-T-H motif) lie at residues 26–47 and 74–97; these read EDIA…LQYK and VYEI…TRTF.

Its function is as follows. Probable transcriptional activator. This is Transcriptional activator RamA (ramA) from Enterobacter cloacae.